A 104-amino-acid polypeptide reads, in one-letter code: UPF0147 protein MK1586 (104 aa).

The protein belongs to the UPF0147 family.

This Methanopyrus kandleri (strain AV19 / DSM 6324 / JCM 9639 / NBRC 100938) protein is UPF0147 protein MK1586.